The following is a 295-amino-acid chain: Urease accessory protein UreD (295 aa).

This sequence belongs to the UreD family. As to quaternary structure, ureD, UreF and UreG form a complex that acts as a GTP-hydrolysis-dependent molecular chaperone, activating the urease apoprotein by helping to assemble the nickel containing metallocenter of UreC. The UreE protein probably delivers the nickel.

The protein localises to the cytoplasm. Required for maturation of urease via the functional incorporation of the urease nickel metallocenter. The sequence is that of Urease accessory protein UreD from Saccharophagus degradans (strain 2-40 / ATCC 43961 / DSM 17024).